Reading from the N-terminus, the 92-residue chain is Small ribosomal subunit protein uS19 (92 aa).

It belongs to the universal ribosomal protein uS19 family.

Protein S19 forms a complex with S13 that binds strongly to the 16S ribosomal RNA. The sequence is that of Small ribosomal subunit protein uS19 from Sodalis glossinidius (strain morsitans).